A 204-amino-acid polypeptide reads, in one-letter code: Glycerol-3-phosphate acyltransferase (204 aa).

The next 5 helical transmembrane spans lie at 8–28, 53–73, 81–101, 116–136, and 155–175; these read ILIF…CYIF, VLAA…VVIA, FITA…IFFG, FGFS…VAII, and VIFT…IIIL.

This sequence belongs to the PlsY family. In terms of assembly, probably interacts with PlsX.

The protein resides in the cell inner membrane. The catalysed reaction is an acyl phosphate + sn-glycerol 3-phosphate = a 1-acyl-sn-glycero-3-phosphate + phosphate. Its pathway is lipid metabolism; phospholipid metabolism. Its function is as follows. Catalyzes the transfer of an acyl group from acyl-phosphate (acyl-PO(4)) to glycerol-3-phosphate (G3P) to form lysophosphatidic acid (LPA). This enzyme utilizes acyl-phosphate as fatty acyl donor, but not acyl-CoA or acyl-ACP. This is Glycerol-3-phosphate acyltransferase from Francisella tularensis subsp. holarctica (strain OSU18).